Reading from the N-terminus, the 100-residue chain is uncharacterized protein (100 aa).

Residues 1-18 (MWGFLVLKARWLVTPVRT) form the signal peptide. Positions 48-86 (LTRGVIRVSPQERSQQNQSAPKGPTPSTRPKPRTLGPQA) are disordered. Residues 58-69 (QERSQQNQSAPK) show a composition bias toward polar residues. Asn64 is a glycosylation site (N-linked (GlcNAc...) asparagine).

It localises to the secreted. This is an uncharacterized protein from Homo sapiens (Human).